The primary structure comprises 660 residues: Pro-secreted protein ORF2 (660 aa).

Residues 1-19 form the signal peptide; sequence MGPRPILLLFLMFLPMLLA. Disordered stretches follow at residues 20–43 and 66–127; these read PPPG…GFWG and VTAA…DVDS. The Nuclear localization signal motif lies at 28–33; the sequence is RRRGRR. A compositionally biased stretch (low complexity) spans 92 to 116; sequence QRPAAASRRRPTTAGAAPLTAVAPA. Asn137 and Asn310 each carry an N-linked (GlcNAc...) asparagine; by host glycan. The particle formation stretch occupies residues 368-394; the sequence is IALTLFNLADTLLGGLPTELISSAGGQ. Asn562 carries N-linked (GlcNAc...) asparagine; by host glycosylation. An oligomerization region spans residues 585 to 610; that stretch reads TTSLGAGPVSISAVAVLGPHSALALL.

Belongs to the hepevirus capsid protein family. Homodimer. As to quaternary structure, self-assembles to form the capsid. The capsid is dominated by dimers that define the 30 morphological units. Interacts with phosphorylated protein ORF3. Interacts with host TMEM134. Interacts with host ASGR1 and ASGR2; these interactions facilitate infection of host hepatocytes. Post-translationally, cleaved by host protease in the N-terminus. N-glycosylated. In terms of processing, not N-glycosylated. The C-terminus of the capsid protein ORF2 is truncated in non-enveloped virions shedded in feces, probably due to host proteases.

The protein resides in the secreted. The protein localises to the virion. It localises to the host cytoplasm. Its subcellular location is the host endoplasmic reticulum. It is found in the host Golgi apparatus. The protein resides in the host cell surface. Functionally, plays a role in the inhibition of host antibody-mediated neutralization without blocking viral cell entry. In terms of biological role, forms an icosahedral capsid with a T=1 symmetry and a 34 nm diameter. The capsid is composed of 60 copies linked to each other. Binds to the 5' end of the genomic RNA to mediate genome encapsidation. Binds to heparin surface proteoglycans (HSPGs) to mediate viral entry. Additionally, the interactions with host ASGR1 and ASGR2 facilitate viral infection of hepatocytes. Inhibits IFN production by blocking host TBK1-induced IRF3 phosphorylation. The nuclear form probably modulates host gene expression. The polypeptide is Pro-secreted protein ORF2 (Bandicota bengalensis (lesser bandicoot rat)).